Reading from the N-terminus, the 244-residue chain is 5-oxoprolinase subunit A (244 aa).

This sequence belongs to the LamB/PxpA family. As to quaternary structure, forms a complex composed of PxpA, PxpB and PxpC.

The enzyme catalyses 5-oxo-L-proline + ATP + 2 H2O = L-glutamate + ADP + phosphate + H(+). In terms of biological role, catalyzes the cleavage of 5-oxoproline to form L-glutamate coupled to the hydrolysis of ATP to ADP and inorganic phosphate. In Salmonella dublin (strain CT_02021853), this protein is 5-oxoprolinase subunit A.